The primary structure comprises 197 residues: 7-methyl-GTP pyrophosphatase (197 aa).

The active-site Proton acceptor is Asp-69.

Belongs to the Maf family. YceF subfamily. The cofactor is a divalent metal cation.

It is found in the cytoplasm. It carries out the reaction N(7)-methyl-GTP + H2O = N(7)-methyl-GMP + diphosphate + H(+). Its function is as follows. Nucleoside triphosphate pyrophosphatase that hydrolyzes 7-methyl-GTP (m(7)GTP). May have a dual role in cell division arrest and in preventing the incorporation of modified nucleotides into cellular nucleic acids. This Pectobacterium atrosepticum (strain SCRI 1043 / ATCC BAA-672) (Erwinia carotovora subsp. atroseptica) protein is 7-methyl-GTP pyrophosphatase.